The chain runs to 172 residues: Large ribosomal subunit protein uL10 (172 aa).

Belongs to the universal ribosomal protein uL10 family. Part of the ribosomal stalk of the 50S ribosomal subunit. The N-terminus interacts with L11 and the large rRNA to form the base of the stalk. The C-terminus forms an elongated spine to which L12 dimers bind in a sequential fashion forming a multimeric L10(L12)X complex.

Its function is as follows. Forms part of the ribosomal stalk, playing a central role in the interaction of the ribosome with GTP-bound translation factors. The polypeptide is Large ribosomal subunit protein uL10 (Prosthecochloris aestuarii (strain DSM 271 / SK 413)).